Reading from the N-terminus, the 227-residue chain is Enolase-phosphatase E1 (227 aa).

This sequence belongs to the HAD-like hydrolase superfamily. MasA/MtnC family. In terms of assembly, monomer. Mg(2+) is required as a cofactor.

It catalyses the reaction 5-methylsulfanyl-2,3-dioxopentyl phosphate + H2O = 1,2-dihydroxy-5-(methylsulfanyl)pent-1-en-3-one + phosphate. The protein operates within amino-acid biosynthesis; L-methionine biosynthesis via salvage pathway; L-methionine from S-methyl-5-thio-alpha-D-ribose 1-phosphate: step 3/6. It functions in the pathway amino-acid biosynthesis; L-methionine biosynthesis via salvage pathway; L-methionine from S-methyl-5-thio-alpha-D-ribose 1-phosphate: step 4/6. In terms of biological role, bifunctional enzyme that catalyzes the enolization of 2,3-diketo-5-methylthiopentyl-1-phosphate (DK-MTP-1-P) into the intermediate 2-hydroxy-3-keto-5-methylthiopentenyl-1-phosphate (HK-MTPenyl-1-P), which is then dephosphorylated to form the acireductone 1,2-dihydroxy-3-keto-5-methylthiopentene (DHK-MTPene). This is Enolase-phosphatase E1 from Pseudomonas syringae pv. tomato (strain ATCC BAA-871 / DC3000).